We begin with the raw amino-acid sequence, 391 residues long: Ferrochelatase (391 aa).

Residues His-196 and Glu-281 each coordinate Fe cation.

Belongs to the ferrochelatase family.

It is found in the cytoplasm. The catalysed reaction is heme b + 2 H(+) = protoporphyrin IX + Fe(2+). It participates in porphyrin-containing compound metabolism; protoheme biosynthesis; protoheme from protoporphyrin-IX: step 1/1. In terms of biological role, catalyzes the ferrous insertion into protoporphyrin IX. This is Ferrochelatase from Synechococcus sp. (strain CC9605).